The primary structure comprises 321 residues: Phospho-N-acetylmuramoyl-pentapeptide-transferase (321 aa).

A run of 10 helical transmembrane segments spans residues 6–26, 54–74, 77–97, 117–137, 143–163, 175–195, 200–220, 226–246, 251–271, and 301–321; these read IFIP…LFIG, MGGV…GLFF, FTPS…LGYL, LIGQ…EGFS, FGVA…FWLV, IDGL…IIAW, FDVV…FPYN, IFMG…ISII, WTLL…ILQV, and IDFV…WILF.

This sequence belongs to the glycosyltransferase 4 family. MraY subfamily. Requires Mg(2+) as cofactor.

Its subcellular location is the cell membrane. The catalysed reaction is UDP-N-acetyl-alpha-D-muramoyl-L-alanyl-gamma-D-glutamyl-L-lysyl-D-alanyl-D-alanine + di-trans,octa-cis-undecaprenyl phosphate = Mur2Ac(oyl-L-Ala-gamma-D-Glu-L-Lys-D-Ala-D-Ala)-di-trans,octa-cis-undecaprenyl diphosphate + UMP. It functions in the pathway cell wall biogenesis; peptidoglycan biosynthesis. Its function is as follows. Catalyzes the initial step of the lipid cycle reactions in the biosynthesis of the cell wall peptidoglycan: transfers peptidoglycan precursor phospho-MurNAc-pentapeptide from UDP-MurNAc-pentapeptide onto the lipid carrier undecaprenyl phosphate, yielding undecaprenyl-pyrophosphoryl-MurNAc-pentapeptide, known as lipid I. This chain is Phospho-N-acetylmuramoyl-pentapeptide-transferase, found in Enterococcus faecalis (strain ATCC 700802 / V583).